The following is a 428-amino-acid chain: Adenylosuccinate synthetase (428 aa).

Residues 12–18 (GDEGKGK) and 40–42 (GHT) each bind GTP. Aspartate 13 acts as the Proton acceptor in catalysis. Aspartate 13 and glycine 40 together coordinate Mg(2+). Residues 13 to 16 (DEGK), 38 to 41 (NAGH), threonine 128, arginine 142, glutamine 223, threonine 238, and arginine 302 contribute to the IMP site. The Proton donor role is filled by histidine 41. 298–304 (VTTGRPR) provides a ligand contact to substrate. GTP-binding positions include arginine 304, 330 to 332 (KLD), and 413 to 415 (GVG).

Belongs to the adenylosuccinate synthetase family. In terms of assembly, homodimer. Mg(2+) serves as cofactor.

It is found in the cytoplasm. It catalyses the reaction IMP + L-aspartate + GTP = N(6)-(1,2-dicarboxyethyl)-AMP + GDP + phosphate + 2 H(+). It participates in purine metabolism; AMP biosynthesis via de novo pathway; AMP from IMP: step 1/2. Plays an important role in the de novo pathway of purine nucleotide biosynthesis. Catalyzes the first committed step in the biosynthesis of AMP from IMP. The sequence is that of Adenylosuccinate synthetase from Acidothermus cellulolyticus (strain ATCC 43068 / DSM 8971 / 11B).